A 280-amino-acid polypeptide reads, in one-letter code: Phosphonates import ATP-binding protein PhnC 1 (280 aa).

The region spanning 2-246 (LRIENLDKRY…VLTRIYGEED (245 aa)) is the ABC transporter domain. ATP is bound at residue 35 to 42 (GPSGAGKS). The segment at 247-266 (WSKTSDEDADSVDAPPRAAD) is disordered.

It belongs to the ABC transporter superfamily. Phosphonates importer (TC 3.A.1.9.1) family. In terms of assembly, the complex is composed of two ATP-binding proteins (PhnC), two transmembrane proteins (PhnE) and a solute-binding protein (PhnD).

Its subcellular location is the cell inner membrane. The enzyme catalyses phosphonate(out) + ATP + H2O = phosphonate(in) + ADP + phosphate + H(+). Part of the ABC transporter complex PhnCDE involved in phosphonates import. Responsible for energy coupling to the transport system. The polypeptide is Phosphonates import ATP-binding protein PhnC 1 (Rhodopseudomonas palustris (strain HaA2)).